The following is a 688-amino-acid chain: ATP-dependent RNA helicase ded1 (688 aa).

Polar residues-rich tracts occupy residues 1–15 (MADQ…LSID) and 55–67 (GLNN…NNNY). The disordered stretch occupies residues 1-170 (MADQLSSGMG…TPDDPSKQHT (170 aa)). Gly residues predominate over residues 88–102 (GFEGQQGAGWGGPRP). Residues 103–114 (QGGFNPNAYRGN) are compositionally biased toward low complexity. Residues 115-129 (AGAGAGAGAGGGGGS) show a composition bias toward gly residues. Positions 194 to 222 (LTFSNPPLDNHLISNIQLARYNVPTPVQK) match the Q motif motif. Residues 225–416 (IPIVMGGRDL…RDFLKDYIFL (192 aa)) form the Helicase ATP-binding domain. 238–245 (AQTGSGKT) lines the ATP pocket. The short motif at 360-363 (DEAD) is the DEAD box element. The region spanning 427-587 (NITQKVEYVE…EVPAFLETIA (161 aa)) is the Helicase C-terminal domain. The disordered stretch occupies residues 590–615 (SSFGGGRGGRGGGRGGGRGRTQTADY). Residues 592 to 608 (FGGGRGGRGGGRGGGRG) show a composition bias toward gly residues.

This sequence belongs to the DEAD box helicase family. DDX3/DED1 subfamily.

The protein resides in the cytoplasm. It carries out the reaction ATP + H2O = ADP + phosphate + H(+). Functionally, ATP-binding RNA helicase involved in translation initiation. Remodels RNA in response to ADP and ATP concentrations by facilitating disruption, but also formation of RNA duplexes. The sequence is that of ATP-dependent RNA helicase ded1 (drh-9) from Neurospora crassa (strain ATCC 24698 / 74-OR23-1A / CBS 708.71 / DSM 1257 / FGSC 987).